A 602-amino-acid polypeptide reads, in one-letter code: ATP-dependent DNA helicase II subunit 1 (602 aa).

Residues 268–483 (FQCPLILDEK…YDNMKKVTQS (216 aa)) form the Ku domain. A phosphoserine mark is found at Ser370, Ser371, and Ser372.

Belongs to the ku70 family. Heterodimer of YKU70/HDF1 and YKU80/HDF2. Post-translationally, sumoylated by MMS21.

It is found in the nucleus. It localises to the chromosome. The protein localises to the telomere. It carries out the reaction ATP + H2O = ADP + phosphate + H(+). In terms of biological role, single-stranded DNA-dependent ATP-dependent helicase. Involved in non-homologous end joining (NHEJ) DNA double strand break repair. DNA-binding is sequence-independent but has a high affinity to nicks in double-stranded DNA and to the ends of duplex DNA. Binds to naturally occurring chromosomal ends, and therefore provides chromosomal end protection. Appears to have a role in recruitment of telomerase and CDC13 to the telomere and the subsequent telomere elongation. Required also for telomere recombination to repair telomeric ends in the absence of telomerase. KU70, of the KU70/KU80 heterodimer, binds to the stem loop of TLC1, the RNA component of telomerase. Involved in telomere maintenance. Interacts with telomeric repeats and subtelomeric sequences thereby controlling telomere length and protecting against subtelomeric rearrangement. Maintains telomeric chromatin, which is involved in silencing the expression of genes located at the telomere. Required for mating-type switching. The sequence is that of ATP-dependent DNA helicase II subunit 1 (YKU70) from Saccharomyces cerevisiae (strain ATCC 204508 / S288c) (Baker's yeast).